A 366-amino-acid chain; its full sequence is Phospho-N-acetylmuramoyl-pentapeptide-transferase (366 aa).

A run of 10 helical transmembrane segments spans residues 27-47, 71-91, 93-113, 134-154, 174-194, 205-225, 245-265, 268-288, 294-314, and 343-363; these read AALF…INSL, TPTM…LLWA, LSNV…AIGF, LGIE…TALA, FMIN…VGAG, GLAI…AYLA, LAVV…FNAP, AIFM…TVAV, IVMA…IIQV, and QVVI…LSTL.

The protein belongs to the glycosyltransferase 4 family. MraY subfamily. Mg(2+) is required as a cofactor.

The protein resides in the cell inner membrane. The catalysed reaction is UDP-N-acetyl-alpha-D-muramoyl-L-alanyl-gamma-D-glutamyl-meso-2,6-diaminopimeloyl-D-alanyl-D-alanine + di-trans,octa-cis-undecaprenyl phosphate = di-trans,octa-cis-undecaprenyl diphospho-N-acetyl-alpha-D-muramoyl-L-alanyl-D-glutamyl-meso-2,6-diaminopimeloyl-D-alanyl-D-alanine + UMP. It participates in cell wall biogenesis; peptidoglycan biosynthesis. Catalyzes the initial step of the lipid cycle reactions in the biosynthesis of the cell wall peptidoglycan: transfers peptidoglycan precursor phospho-MurNAc-pentapeptide from UDP-MurNAc-pentapeptide onto the lipid carrier undecaprenyl phosphate, yielding undecaprenyl-pyrophosphoryl-MurNAc-pentapeptide, known as lipid I. The polypeptide is Phospho-N-acetylmuramoyl-pentapeptide-transferase (Rhizobium leguminosarum bv. trifolii (strain WSM2304)).